Here is a 411-residue protein sequence, read N- to C-terminus: uncharacterized protein (411 aa).

The segment at 32 to 108 is disordered; that stretch reads LGGDPAPKPT…PEHPRRIPIP (77 aa).

This is an uncharacterized protein from Ictalurid herpesvirus 1 (strain Auburn) (IcHV-1).